The following is a 366-amino-acid chain: Autoinducer 2-binding periplasmic protein LuxP (366 aa).

Residues 1-13 (MKKILLTCLLASA) form the signal peptide.

This sequence belongs to the bacterial solute-binding protein 2 family.

The protein resides in the periplasm. Its function is as follows. Binds to an autoinducer molecule. This complex then interacts with the LuxQ sensor protein. The chain is Autoinducer 2-binding periplasmic protein LuxP (luxP) from Vibrio vulnificus (strain CMCP6).